The following is a 293-amino-acid chain: Probable metal transport system membrane protein TC_0698 (293 aa).

The next 7 helical transmembrane spans lie at 18-38, 41-61, 68-88, 101-121, 142-162, 186-206, and 242-262; these read SLLA…YIVV, IVSI…IALW, LPIS…ICIG, IISM…SKLP, DLYF…ICHT, FLLL…MGVI, and FLGI…IAIL.

This sequence belongs to the ABC-3 integral membrane protein family.

The protein resides in the cell inner membrane. Its function is as follows. Part of an ATP-driven transport system TC_0696/TC_0697/TC_0698 for a metal. This Chlamydia muridarum (strain MoPn / Nigg) protein is Probable metal transport system membrane protein TC_0698.